The following is a 318-amino-acid chain: 4-hydroxy-3-methylbut-2-enyl diphosphate reductase (318 aa).

A [4Fe-4S] cluster-binding site is contributed by C12. 2 residues coordinate (2E)-4-hydroxy-3-methylbut-2-enyl diphosphate: H41 and H74. Residues H41 and H74 each coordinate dimethylallyl diphosphate. Residues H41 and H74 each contribute to the isopentenyl diphosphate site. C96 is a [4Fe-4S] cluster binding site. Position 124 (H124) interacts with (2E)-4-hydroxy-3-methylbut-2-enyl diphosphate. H124 is a dimethylallyl diphosphate binding site. H124 is a binding site for isopentenyl diphosphate. Catalysis depends on E126, which acts as the Proton donor. A (2E)-4-hydroxy-3-methylbut-2-enyl diphosphate-binding site is contributed by T167. C197 provides a ligand contact to [4Fe-4S] cluster. Residues S225, S226, N227, and S269 each coordinate (2E)-4-hydroxy-3-methylbut-2-enyl diphosphate. Residues S225, S226, N227, and S269 each contribute to the dimethylallyl diphosphate site. Isopentenyl diphosphate is bound by residues S225, S226, N227, and S269.

This sequence belongs to the IspH family. [4Fe-4S] cluster serves as cofactor.

It catalyses the reaction isopentenyl diphosphate + 2 oxidized [2Fe-2S]-[ferredoxin] + H2O = (2E)-4-hydroxy-3-methylbut-2-enyl diphosphate + 2 reduced [2Fe-2S]-[ferredoxin] + 2 H(+). The catalysed reaction is dimethylallyl diphosphate + 2 oxidized [2Fe-2S]-[ferredoxin] + H2O = (2E)-4-hydroxy-3-methylbut-2-enyl diphosphate + 2 reduced [2Fe-2S]-[ferredoxin] + 2 H(+). It participates in isoprenoid biosynthesis; dimethylallyl diphosphate biosynthesis; dimethylallyl diphosphate from (2E)-4-hydroxy-3-methylbutenyl diphosphate: step 1/1. It functions in the pathway isoprenoid biosynthesis; isopentenyl diphosphate biosynthesis via DXP pathway; isopentenyl diphosphate from 1-deoxy-D-xylulose 5-phosphate: step 6/6. Its function is as follows. Catalyzes the conversion of 1-hydroxy-2-methyl-2-(E)-butenyl 4-diphosphate (HMBPP) into a mixture of isopentenyl diphosphate (IPP) and dimethylallyl diphosphate (DMAPP). Acts in the terminal step of the DOXP/MEP pathway for isoprenoid precursor biosynthesis. This is 4-hydroxy-3-methylbut-2-enyl diphosphate reductase from Francisella tularensis subsp. holarctica (strain LVS).